We begin with the raw amino-acid sequence, 330 residues long: Ketol-acid reductoisomerase (NADP(+)) (330 aa).

A KARI N-terminal Rossmann domain is found at 1–181 (MNAYYEQDAD…GGTKAGVIET (181 aa)). NADP(+) contacts are provided by residues 24 to 27 (FGSQ), arginine 47, serine 50, serine 52, and 82 to 85 (DQYQ). Histidine 107 is a catalytic residue. Glycine 133 contributes to the NADP(+) binding site. In terms of domain architecture, KARI C-terminal knotted spans 182-327 (TFKNETETDL…AKLRDMMSWL (146 aa)). Mg(2+) is bound by residues aspartate 190, glutamate 194, glutamate 226, and glutamate 230. Serine 251 is a binding site for substrate.

This sequence belongs to the ketol-acid reductoisomerase family. It depends on Mg(2+) as a cofactor.

The enzyme catalyses (2R)-2,3-dihydroxy-3-methylbutanoate + NADP(+) = (2S)-2-acetolactate + NADPH + H(+). The catalysed reaction is (2R,3R)-2,3-dihydroxy-3-methylpentanoate + NADP(+) = (S)-2-ethyl-2-hydroxy-3-oxobutanoate + NADPH + H(+). It functions in the pathway amino-acid biosynthesis; L-isoleucine biosynthesis; L-isoleucine from 2-oxobutanoate: step 2/4. It participates in amino-acid biosynthesis; L-valine biosynthesis; L-valine from pyruvate: step 2/4. Its function is as follows. Involved in the biosynthesis of branched-chain amino acids (BCAA). Catalyzes an alkyl-migration followed by a ketol-acid reduction of (S)-2-acetolactate (S2AL) to yield (R)-2,3-dihydroxy-isovalerate. In the isomerase reaction, S2AL is rearranged via a Mg-dependent methyl migration to produce 3-hydroxy-3-methyl-2-ketobutyrate (HMKB). In the reductase reaction, this 2-ketoacid undergoes a metal-dependent reduction by NADPH to yield (R)-2,3-dihydroxy-isovalerate. This Chlorobium phaeobacteroides (strain BS1) protein is Ketol-acid reductoisomerase (NADP(+)).